The sequence spans 257 residues: Matrix protein (257 aa).

The Nuclear export signal motif lies at 193 to 205; sequence VAPYAGLTLVINI.

The protein belongs to the pneumovirinae M protein family. In terms of assembly, forms dimers. Forms higher-order oligomers. Interacts with glycoprotein G (via N-terminus). Interacts with protein M2-1; this interaction directs the matrix protein localization to cytoplasmic inclusions comprising viral proteins L, N, P, and M2-1 and mediates the matrix protein association with the nucleocapsid.

Its subcellular location is the virion. The protein resides in the host cytoplasm. It localises to the host nucleus. The protein localises to the host cell membrane. Its function is as follows. Plays a crucial role in virus assembly into filaments and budding. Early in infection, localizes in the nucleus where it may inhibit host cell transcription. Later in infection, traffics to the cytoplasm to associate with inclusion bodies, the site of viral transcription and replication. During virus assembly and budding, acts as a bridge between the nucleocapsid and the lipid bilayer. The polypeptide is Matrix protein (M) (Murine pneumonia virus (strain 15) (MPV)).